A 407-amino-acid polypeptide reads, in one-letter code: Histone-lysine N-methyltransferase SUV39H2 (407 aa).

Residues 43–101 (YEVEYLCDYKVEEGKEYYLVKWKGWPESSNTWEPQKNLKCPKLLENFLSDKDEYLSRMK) enclose the Chromo domain. The region spanning 185-243 (TGCECSDCPAEKCCPKEAGFILAYNKQKKLKIQPGLPIYECNSFCRCGPDCPNRIVQKG) is the Pre-SET domain. 9 residues coordinate Zn(2+): C187, C189, C192, C197, C198, C225, C229, C231, and C235. The 124-residue stretch at 246-369 (YSLCIFRTNN…AGEELTFDYQ (124 aa)) folds into the SET domain. S-adenosyl-L-methionine is bound by residues 257 to 259 (RGW), Y300, and 326 to 327 (NH). Residues C329, C395, C397, and C402 each coordinate Zn(2+). The Post-SET domain occupies 391–407 (IRTVCKCGAVCCRGYLN).

The protein belongs to the class V-like SAM-binding methyltransferase superfamily. Histone-lysine methyltransferase family. Suvar3-9 subfamily.

It is found in the nucleus. The protein resides in the chromosome. The protein localises to the centromere. It carries out the reaction L-lysyl(9)-[histone H3] + 3 S-adenosyl-L-methionine = N(6),N(6),N(6)-trimethyl-L-lysyl(9)-[histone H3] + 3 S-adenosyl-L-homocysteine + 3 H(+). Histone methyltransferase that specifically trimethylates 'Lys-9' of histone H3 using monomethylated H3 'Lys-9' as substrate. H3 'Lys-9' trimethylation represents a specific tag for epigenetic transcriptional repression by recruiting HP1 (CBX1, CBX3 and/or CBX5) proteins to methylated histones. Mainly functions in heterochromatin regions, thereby playing a central role in the establishment of constitutive heterochromatin at pericentric and telomere regions. H3 'Lys-9' trimethylation is also required to direct DNA methylation at pericentric repeats. SUV39H1 is targeted to histone H3 via its interaction with RB1 and is involved in many processes. The sequence is that of Histone-lysine N-methyltransferase SUV39H2 (SUV39H2) from Gallus gallus (Chicken).